A 409-amino-acid chain; its full sequence is Autotransproter heptosyltransferase BAHTCr (409 aa).

ADP-D-glycero-beta-D-manno-heptose contacts are provided by threonine 107, leucine 108, and glycine 109. The active-site Proton acceptor is aspartate 110. Residues glutamine 224, threonine 226, lysine 230, arginine 257, glycine 302, and glutamate 326 each contribute to the ADP-D-glycero-beta-D-manno-heptose site. Fe(3+) contacts are provided by cysteine 339, cysteine 342, cysteine 358, and cysteine 370.

Belongs to the glycosyltransferase 9 family. In terms of assembly, homododecamer composed of 6 homodimers forming a ring. Fe(3+) serves as cofactor.

Its subcellular location is the cytoplasm. It carries out the reaction ADP-D-glycero-beta-D-manno-heptose + L-seryl-[protein] = O-(D-glycero-alpha-D-manno-heptosyl)-L-seryl-[protein] + ADP + H(+). The catalysed reaction is ADP-L-glycero-beta-D-manno-heptose + L-seryl-[protein] = O-(L-glycero-alpha-D-manno-heptosyl)-L-seryl-[protein] + ADP + H(+). In terms of biological role, glycosylates autotransporter CARC. By glycosylating CARC, involved in the colonization of the mouse host gastrointestinal tract. This is Autotransproter heptosyltransferase BAHTCr from Citrobacter rodentium (strain ICC168) (Citrobacter freundii biotype 4280).